The chain runs to 93 residues: Small ribosomal subunit protein uS19 (93 aa).

The protein belongs to the universal ribosomal protein uS19 family.

Functionally, protein S19 forms a complex with S13 that binds strongly to the 16S ribosomal RNA. This Nitratidesulfovibrio vulgaris (strain ATCC 29579 / DSM 644 / CCUG 34227 / NCIMB 8303 / VKM B-1760 / Hildenborough) (Desulfovibrio vulgaris) protein is Small ribosomal subunit protein uS19.